We begin with the raw amino-acid sequence, 265 residues long: Serine protease harobin (265 aa).

The N-terminal stretch at 1 to 18 (MPLIRVLASLLILQLSYG) is a signal peptide. Positions 19–33 (KSLDNGAKAITSLDR) are excised as a propeptide. In terms of domain architecture, Peptidase S1 spans 34–257 (IIGGFECNPS…YKDWIEGIIA (224 aa)). 7 disulfides stabilise this stretch: Cys-40/Cys-172, Cys-59/Cys-75, Cys-106/Cys-152, Cys-107/Cys-264, Cys-151/Cys-218, Cys-183/Cys-197, and Cys-208/Cys-233. Catalysis depends on His-74, which acts as the Charge relay system. The N-linked (GlcNAc...) asparagine glycan is linked to Asn-112. Asp-119 functions as the Charge relay system in the catalytic mechanism. An N-linked (GlcNAc...) asparagine glycan is attached at Asn-130. Residue Ser-212 is the Charge relay system of the active site.

Belongs to the peptidase S1 family. Snake venom subfamily. Monomer. Harobin contains three additional Cys residues than other snake venom serine proteases, suggesting an additional disulfide bond. In addition, it is more stable than other snake 6-disulfide-bond serine proteases, since it is less sensitive to DTT. In terms of tissue distribution, expressed by the venom gland.

It localises to the secreted. Its activity is regulated as follows. Inhibited by PMSF. In terms of biological role, serine protein with fibrinolytic and fibrinogenolytic activities. Degrades Bbeta-chain (FGB) of fibrinogen first and then the Aalpha-chain (FGA). Gamma-chain (FGG) are also digested on prolonged incubation. In vitro, it cleaves high molecular weight (HMW) kininogen (KNG) releasing bradykinin that promotes vasodilation. In vitro and in vivo, it cleaves angiotensin-2 (AGT). This explains the reduction of blood pressure in hypertensive rats. Also has antithrombotic effects on thrombosis animal models. The chain is Serine protease harobin from Hydrophis hardwickii (Hardwick's spine-bellied seasnake).